The following is a 155-amino-acid chain: V-type proton ATPase 16 kDa proteolipid subunit c (155 aa).

Residues Met-1–Tyr-10 are Lumenal-facing. A helical membrane pass occupies residues Ala-11–Gly-33. Residues Thr-34–Ser-55 lie on the Cytoplasmic side of the membrane. Residues Ile-56–Ile-76 traverse the membrane as a helical segment. Over Ala-77–Gln-92 the chain is Lumenal. A helical transmembrane segment spans residues Leu-93–Gly-114. At Asp-115 to Met-131 the chain is on the cytoplasmic side. Residues Ile-132–Leu-152 traverse the membrane as a helical segment. Residues Ser-153–Lys-155 are Lumenal-facing.

Belongs to the V-ATPase proteolipid subunit family. As to quaternary structure, V-ATPase is a heteromultimeric enzyme made up of two complexes: the ATP-hydrolytic V1 complex and the proton translocation V0 complex. The V1 complex consists of three catalytic AB heterodimers that form a heterohexamer, three peripheral stalks each consisting of EG heterodimers, one central rotor including subunits D and F, and the regulatory subunits C and H. The proton translocation complex V0 consists of the proton transport subunit a, a ring of proteolipid subunits c9c'', rotary subunit d, subunits e and f, and the accessory subunits ATP6AP1/Ac45 and ATP6AP2/PRR. Interacts with the V0 complex V-ATPase subunit a4 ATP6V0A4. Interacts with LASS2. Interacts with RNF182; this interaction leads to ubiquitination and degradation via the proteasome pathway. In terms of assembly, (Microbial infection) Interacts with HTLV-1 accessory protein p12I. Post-translationally, ubiquitinated by RNF182, leading to its degradation via the ubiquitin-proteasome pathway.

The protein resides in the cytoplasmic vesicle. Its subcellular location is the clathrin-coated vesicle membrane. The protein localises to the secretory vesicle. It localises to the synaptic vesicle membrane. In terms of biological role, proton-conducting pore forming subunit of the V0 complex of vacuolar(H+)-ATPase (V-ATPase), a multisubunit enzyme composed of a peripheral complex (V1) that hydrolyzes ATP and a membrane integral complex (V0) that translocates protons. V-ATPase is responsible for acidifying and maintaining the pH of intracellular compartments, and in some cell types, it is targeted to the plasma membrane, where it is responsible for acidifying the extracellular environment. The polypeptide is V-type proton ATPase 16 kDa proteolipid subunit c (ATP6V0C) (Homo sapiens (Human)).